Here is a 407-residue protein sequence, read N- to C-terminus: Flagellar calcium-binding protein TB-44A (407 aa).

Positions 1-27 are disordered; the sequence is MGCSASKDTTNSKDGAASKGGKDGKTT. Residues 25 to 399 are 2 X 186 AA almost perfect repeats; it reads KTTADRKVAW…LQVCGDPDGE (375 aa). The region spanning 48–83 is the EF-hand 1 domain; that stretch reads ESKSRRIELFKRFDTNGTGKLSFREVLDGCYSILKL. Ca(2+)-binding residues include Asp-61, Asn-63, Thr-65, Lys-67, and Glu-72. Positions 110 to 121 are ancestral calcium site 2; the sequence is GVGEEDLVEFLE. EF-hand domains lie at 130–165, 167–202, and 237–272; these read YDIF…WKEW, VDIT…KKLQ, and ESKS…ILKL. Ca(2+) is bound by residues Asp-143, Asp-145, Ser-147, Glu-154, Asp-180, Asn-182, Ser-184, Glu-191, Asp-250, Asn-252, Thr-254, Lys-256, and Glu-261. The segment at 299-310 is ancestral calcium site 6; it reads GVGEEDLVEFLE. EF-hand domains are found at residues 319–354 and 356–391; these read YDIF…WKEW and VDIT…KKLQ. Ca(2+) is bound by residues Asp-332, Asp-334, Ser-336, Glu-343, Asp-369, Asn-371, Ser-373, and Glu-380.

This sequence belongs to the calflagin family.

The protein resides in the cell projection. The protein localises to the cilium. It localises to the flagellum. Functionally, may contribute to the rapid motility of the trypanosomes, playing a role either in flagellar structure or in calcium metabolism. Could alternate between a GDP-bound inactive form to a calcium/GTP-bound active form. The sequence is that of Flagellar calcium-binding protein TB-44A from Trypanosoma brucei brucei.